The primary structure comprises 453 residues: Bifunctional protein GlmU (453 aa).

The tract at residues 1–228 is pyrophosphorylase; it reads MPHWAAVIMA…VHEALGINSR (228 aa). UDP-N-acetyl-alpha-D-glucosamine-binding positions include Lys-23, Gln-73, 78–79, 100–102, Gly-139, Glu-153, Asn-168, and Asn-226; these read GT and SGD. Asp-102 contacts Mg(2+). Asn-226 contributes to the Mg(2+) binding site. Positions 229 to 249 are linker; sequence AQLAAAEDVARQRILSYWMEE. An N-acetyltransferase region spans residues 250–453; sequence GVTIIDPRST…IENWVRNKKK (204 aa). Positions 331 and 349 each coordinate UDP-N-acetyl-alpha-D-glucosamine. His-361 acts as the Proton acceptor in catalysis. The UDP-N-acetyl-alpha-D-glucosamine site is built by Tyr-364 and Asn-375. Residues Ala-378, 384–385, Ser-403, Ala-421, and Arg-438 contribute to the acetyl-CoA site; that span reads NY.

This sequence in the N-terminal section; belongs to the N-acetylglucosamine-1-phosphate uridyltransferase family. In the C-terminal section; belongs to the transferase hexapeptide repeat family. As to quaternary structure, homotrimer. The cofactor is Mg(2+).

The protein resides in the cytoplasm. The catalysed reaction is alpha-D-glucosamine 1-phosphate + acetyl-CoA = N-acetyl-alpha-D-glucosamine 1-phosphate + CoA + H(+). It catalyses the reaction N-acetyl-alpha-D-glucosamine 1-phosphate + UTP + H(+) = UDP-N-acetyl-alpha-D-glucosamine + diphosphate. Its pathway is nucleotide-sugar biosynthesis; UDP-N-acetyl-alpha-D-glucosamine biosynthesis; N-acetyl-alpha-D-glucosamine 1-phosphate from alpha-D-glucosamine 6-phosphate (route II): step 2/2. The protein operates within nucleotide-sugar biosynthesis; UDP-N-acetyl-alpha-D-glucosamine biosynthesis; UDP-N-acetyl-alpha-D-glucosamine from N-acetyl-alpha-D-glucosamine 1-phosphate: step 1/1. It functions in the pathway bacterial outer membrane biogenesis; LPS lipid A biosynthesis. Its function is as follows. Catalyzes the last two sequential reactions in the de novo biosynthetic pathway for UDP-N-acetylglucosamine (UDP-GlcNAc). The C-terminal domain catalyzes the transfer of acetyl group from acetyl coenzyme A to glucosamine-1-phosphate (GlcN-1-P) to produce N-acetylglucosamine-1-phosphate (GlcNAc-1-P), which is converted into UDP-GlcNAc by the transfer of uridine 5-monophosphate (from uridine 5-triphosphate), a reaction catalyzed by the N-terminal domain. The chain is Bifunctional protein GlmU from Desulfitobacterium hafniense (strain DSM 10664 / DCB-2).